A 393-amino-acid chain; its full sequence is Formate-dependent phosphoribosylglycinamide formyltransferase (393 aa).

N(1)-(5-phospho-beta-D-ribosyl)glycinamide is bound by residues 15–16 (EL) and Glu75. ATP is bound by residues Arg107, Lys148, 153–158 (SSGKGQ), 188–191 (EEYI), and Glu196. The 191-residue stretch at 112-302 (NLAAEKLAIK…EFELHLRAIL (191 aa)) folds into the ATP-grasp domain. Positions 261 and 273 each coordinate Mg(2+). N(1)-(5-phospho-beta-D-ribosyl)glycinamide contacts are provided by residues Asp280, Lys350, and 357–358 (RR).

It belongs to the PurK/PurT family. As to quaternary structure, homodimer.

The enzyme catalyses N(1)-(5-phospho-beta-D-ribosyl)glycinamide + formate + ATP = N(2)-formyl-N(1)-(5-phospho-beta-D-ribosyl)glycinamide + ADP + phosphate + H(+). It participates in purine metabolism; IMP biosynthesis via de novo pathway; N(2)-formyl-N(1)-(5-phospho-D-ribosyl)glycinamide from N(1)-(5-phospho-D-ribosyl)glycinamide (formate route): step 1/1. Functionally, involved in the de novo purine biosynthesis. Catalyzes the transfer of formate to 5-phospho-ribosyl-glycinamide (GAR), producing 5-phospho-ribosyl-N-formylglycinamide (FGAR). Formate is provided by PurU via hydrolysis of 10-formyl-tetrahydrofolate. The chain is Formate-dependent phosphoribosylglycinamide formyltransferase from Prochlorococcus marinus (strain SARG / CCMP1375 / SS120).